The sequence spans 356 residues: D-alanine--D-alanine ligase (356 aa).

In terms of domain architecture, ATP-grasp spans Lys134–Glu339. Asn167 to Glu222 is a binding site for ATP. The Mg(2+) site is built by Asp293, Glu306, and Asn308.

Belongs to the D-alanine--D-alanine ligase family. The cofactor is Mg(2+). Requires Mn(2+) as cofactor.

It localises to the cytoplasm. It catalyses the reaction 2 D-alanine + ATP = D-alanyl-D-alanine + ADP + phosphate + H(+). Its pathway is cell wall biogenesis; peptidoglycan biosynthesis. Cell wall formation. This chain is D-alanine--D-alanine ligase, found in Staphylococcus aureus (strain MSSA476).